We begin with the raw amino-acid sequence, 178 residues long: Translation initiation factor IF-3 (178 aa).

Residues 1-20 (MRRPFRATPVQKDGPRSNRD) are disordered.

The protein belongs to the IF-3 family. Monomer.

The protein resides in the cytoplasm. Its function is as follows. IF-3 binds to the 30S ribosomal subunit and shifts the equilibrium between 70S ribosomes and their 50S and 30S subunits in favor of the free subunits, thus enhancing the availability of 30S subunits on which protein synthesis initiation begins. This Brucella anthropi (strain ATCC 49188 / DSM 6882 / CCUG 24695 / JCM 21032 / LMG 3331 / NBRC 15819 / NCTC 12168 / Alc 37) (Ochrobactrum anthropi) protein is Translation initiation factor IF-3.